Consider the following 830-residue polypeptide: Pentatricopeptide repeat-containing protein At5g55740, chloroplastic (830 aa).

The transit peptide at 1-59 (MASLPFNTIPNKVPFSVSSKPSSKHHDEQAHSPSSTSYFHRVSSLCKNGEIKEALSLVT) directs the protein to the chloroplast. Residues 15–36 (FSVSSKPSSKHHDEQAHSPSST) are disordered. PPR repeat units follow at residues 69 to 103 (GPEI…GDFY), 106 to 136 (NEYI…LRVR), 137 to 171 (NVFS…EIFP), 172 to 206 (DNFV…GLED), 207 to 237 (CVFV…IPDR), 238 to 272 (NAVA…GVEP), 273 to 307 (TRVT…GMEL), 308 to 338 (DNIL…MFEK), 339 to 373 (DVVT…KLKY), 374 to 408 (DCVT…SFES), 409 to 439 (DIVL…TVEK), 440 to 474 (DLIL…GVPP), 475 to 509 (NVIT…GIIP), 510 to 544 (NLIS…GLRP), 545 to 575 (NAFS…IIRN), 581 to 611 (LVSI…KLYS), 612 to 646 (ELPL…GLKP), 647 to 682 (DNIT…SMKP), and 683 to 713 (CLEH…MPFK). The type E motif stretch occupies residues 718-793 (MIQSLVASCN…KPGCSWIQIT (76 aa)). The tract at residues 796–826 (EGVHVFVANDKTHTRINEIQMMLALLLYDMG) is type E(+) motif.

Belongs to the PPR family. PCMP-E subfamily.

The protein localises to the plastid. It is found in the chloroplast. In terms of biological role, plays a major role in chloroplast RNA editing. Acts as a site-recognition transacting factor involved in the edition of the site 2 of ndhD (ndhD-2), which encodes a subunit of the NDH complex. This is Pentatricopeptide repeat-containing protein At5g55740, chloroplastic (CRR21) from Arabidopsis thaliana (Mouse-ear cress).